A 51-amino-acid polypeptide reads, in one-letter code: Insulin-1 (51 aa).

Disulfide bonds link Cys-8–Cys-37, Cys-20–Cys-50, and Cys-36–Cys-41.

It belongs to the insulin family. As to quaternary structure, heterodimer of a B chain and an A chain linked by two disulfide bonds.

The protein localises to the secreted. In terms of biological role, insulin decreases blood glucose concentration. It increases cell permeability to monosaccharides, amino acids and fatty acids. It accelerates glycolysis, the pentose phosphate cycle, and glycogen synthesis in liver. The chain is Insulin-1 (ins1) from Batrachoididae sp. (Toadfish).